Reading from the N-terminus, the 393-residue chain is MAMIGLVGKPNVGKSTMFNALTEKPAEIGNYPFTTIQPNKGIAYITSPCPCKELGVKCNPRNSKCIDGIRHIPVEVIDVAGLVPGAHEGRGMGNKFLDDLRQADAFILVVDASGKTDAEGNPTENYDPVEDVKFLLNEIDMWIYSILTKNWDKLARRAQQEKNIVKALKDQLSGLNIDEDDIKMAIRDMDESPIKWTEEDLLNLAKKLRKISKPMIIAANKADHPDAEKNIERLKKEFKDYIVIPTSAEIELALKRAEKAGIIKRKENDFEIIDESKVNEQMRRAFDYIKDFLKKYGGTGVQECINKAYFDLLDMIVVYPVEDENKFSDKQGNVLPDAFLVKKGSTARDLAYKVHTELGEKFIYAIDAKKKIRVGADYELKHNDIIKIVSAAK.

The OBG-type G domain occupies 2–266; sequence AMIGLVGKPN…AEKAGIIKRK (265 aa). GTP contacts are provided by residues 8 to 15 and 78 to 82; these read GKPNVGKS and DVAGL. The TGS domain occupies 314 to 390; the sequence is DMIVVYPVED…KHNDIIKIVS (77 aa).

It belongs to the TRAFAC class OBG-HflX-like GTPase superfamily. OBG GTPase family.

This is an uncharacterized protein from Methanocaldococcus jannaschii (strain ATCC 43067 / DSM 2661 / JAL-1 / JCM 10045 / NBRC 100440) (Methanococcus jannaschii).